A 239-amino-acid chain; its full sequence is Bidirectional sugar transporter SWEET8 (239 aa).

At 1–6 (MVDAKQ) the chain is on the extracellular side. Residues 7–27 (VRFIIGVIGNVISFGLFAAPA) traverse the membrane as a helical segment. The MtN3/slv 1 domain maps to 9–98 (FIIGVIGNVI…VYLMYCGHKK (90 aa)). Over 28–44 (KTFWRIFKKKSVEEFSY) the chain is Cytoplasmic. The helical transmembrane segment at 45–65 (VPYVATVMNCMLWVFYGLPVV) threads the bilayer. The Extracellular portion of the chain corresponds to 66-69 (HKDS). A helical membrane pass occupies residues 70-90 (ILVSTINGVGLVIELFYVGVY). Residues 91-103 (LMYCGHKKNHRRN) lie on the Cytoplasmic side of the membrane. Residues 104 to 124 (ILGFLALEVILVVAIILITLF) traverse the membrane as a helical segment. The Extracellular portion of the chain corresponds to 125–135 (ALKGDFVKQTF). The 52-residue stretch at 134 to 185 (TFVGVICDVFNIAMYGAPSLAIIKVVKTKSVEYMPFLLSLVCFVNAGIWTTY) folds into the MtN3/slv 2 domain. A helical membrane pass occupies residues 136–156 (VGVICDVFNIAMYGAPSLAII). At 157-168 (KVVKTKSVEYMP) the chain is on the cytoplasmic side. Residues 169–189 (FLLSLVCFVNAGIWTTYSLIF) traverse the membrane as a helical segment. The Extracellular segment spans residues 190–194 (KIDYY). The chain crosses the membrane as a helical span at residues 195–215 (VLASNGIGTFLALSQLIVYFM). Topologically, residues 216–239 (YYKSTPKEKTVKPSEVEISATERV) are cytoplasmic.

It belongs to the SWEET sugar transporter family. Forms homooligomers and heterooligomers with SWEET4, SWEET5, SWEET6, SWEET7, SWEET9, SWEET10, SWEET11, SWEET13, SWEET15, SWEET16 and SWEET17. In terms of tissue distribution, expressed in inflorescences, embryo sacs and pollen, and at a lower level in stems. Barely detected in roots, leaves and seedlings.

Its subcellular location is the cell membrane. Functionally, mediates both low-affinity uptake and efflux of sugar across the plasma membrane. Required, in pollen, for microspore cell integrity and primexine pattern formation. This chain is Bidirectional sugar transporter SWEET8, found in Arabidopsis thaliana (Mouse-ear cress).